The following is a 64-amino-acid chain: Large ribosomal subunit protein bL35 (64 aa).

This sequence belongs to the bacterial ribosomal protein bL35 family.

This chain is Large ribosomal subunit protein bL35, found in Colwellia psychrerythraea (strain 34H / ATCC BAA-681) (Vibrio psychroerythus).